The primary structure comprises 47 residues: Protein YpaB (47 aa).

This chain is Protein YpaB (ypaB), found in Escherichia coli (strain K12).